A 129-amino-acid polypeptide reads, in one-letter code: Replication initiation control protein YabA (129 aa).

Zn(2+) contacts are provided by histidine 103, cysteine 105, cysteine 119, and cysteine 122.

The protein belongs to the YabA family. Homotetramer. Interacts with both DnaA and DnaN, acting as a bridge between these two proteins. Zn(2+) is required as a cofactor.

It localises to the cytoplasm. The protein localises to the nucleoid. Its function is as follows. Involved in control of chromosome replication initiation. Inhibits the cooperative binding of DnaA to the oriC region, thus negatively regulating initiation of chromosome replication. Inhibits the ability of DnaA-ATP to form a helix on DNA; does not disassemble preformed DnaA-DNA helices. Decreases the residence time of DnaA on the chromosome at its binding sites (oriC, replication forks and promoter-binding sites). Tethers DnaA to the replication machinery via the DNA polymerase beta sliding clamp subunit (dnaN). Associates with oriC and other DnaA targets on the chromosome in a DnaA-dependent manner. This chain is Replication initiation control protein YabA, found in Listeria monocytogenes serotype 4b (strain CLIP80459).